The following is a 268-amino-acid chain: Tryptophan synthase alpha chain (268 aa).

Catalysis depends on proton acceptor residues E49 and D60.

The protein belongs to the TrpA family. In terms of assembly, tetramer of two alpha and two beta chains.

It carries out the reaction (1S,2R)-1-C-(indol-3-yl)glycerol 3-phosphate + L-serine = D-glyceraldehyde 3-phosphate + L-tryptophan + H2O. Its pathway is amino-acid biosynthesis; L-tryptophan biosynthesis; L-tryptophan from chorismate: step 5/5. In terms of biological role, the alpha subunit is responsible for the aldol cleavage of indoleglycerol phosphate to indole and glyceraldehyde 3-phosphate. The polypeptide is Tryptophan synthase alpha chain (Escherichia coli (strain SMS-3-5 / SECEC)).